The following is a 473-amino-acid chain: Sulfhydrylase-like protein lolC2 (473 aa).

N6-(pyridoxal phosphate)lysine is present on K226.

This sequence belongs to the trans-sulfuration enzymes family. The cofactor is pyridoxal 5'-phosphate.

It participates in alkaloid biosynthesis. In terms of biological role, sulfhydrylase-like protein; part of the gene cluster that mediates the biosynthesis of loline alkaloids, potent insecticidal agents composed of a pyrrolizidine ring system and an uncommon ether bridge linking carbons 2 and 7. Lolines are structurally differentiated by the various modifications of the L-amino group and include norloline, loline, N-methylloline, N-acetylloline, N-acetylnorloline, and N-formylloline. The first committed step is the condensation of O-acetyl-L-homoserine (derived from L-aspartic acid) and L-proline, probably catalyzed by the gamma-type pyridoxal 5'-phosphate(PLP)-dependent enzyme lolC, to give the diamino diacid, NACPP. Ensuing cyclization, decarboxylation, and acetylation steps yield 1-exo-acetamidopyrrolizidine (AcAP). LolO is required for installation of the ether bridge upon the pathway intermediate, 1-exo-acetamidopyrrolizidine (AcAP). In sequential 2-oxoglutarate- and O(2)-consuming steps, lolO removes hydrogens from C2 and C7 of AcAP to form both carbon-oxygen bonds in N-acetylnorloline (NANL), the precursor to all other lolines. The enzymes lolD, lolE, lolF and lolT have also been proposed to be involved in the ether-bridge installation. Further processing of the exocyclic moiety of NANL by fungal N-acetamidase (LolN), methyltransferase (LolM), and cytochrome P450 (LolP) enzymes, with occasional involvement of a plant acetyltransferase, generates the other known lolines. LolN transforms NANL to norlonine which is monomethylated and dimethylated to respectively lonine and N-methyllonine (NML) by lolM. LolP catalyzes hydroxylation of the methyl group in N-methylloline (NML) and further oxygenation to N-formylloline (NFL). A plant acetyltransferase is responsible for the acetylation of loline to form N-acetylloline (NAL). LolA might interact with aspartate kinase to prevent feedback inhibition of its activity by these end products and thereby promote production of L-homoserine from L-aspartate. This chain is Sulfhydrylase-like protein lolC2, found in Epichloe uncinata (Endophyte fungus).